The primary structure comprises 2493 residues: Non-reducing polyketide synthase pkiA (2493 aa).

Residues 129-243 form an N-terminal acylcarrier protein transacylase domain (SAT) region; sequence PLLMMTHFVQ…VQYDENRATI (115 aa). The active-site Nucleophile; for transacylase activity is the C160. The active-site Proton donor/acceptor; for transacylase activity is H274. A Ketosynthase family 3 (KS3) domain is found at 401–818; sequence ETDIAIVGMA…GSNASMVITQ (418 aa). Catalysis depends on for beta-ketoacyl synthase activity residues C567, H702, and H741. Residues 926-1261 form a malonyl-CoA:ACP transacylase (MAT) region; sequence CFGGQVGRSI…EYAPLLLPPY (336 aa). The interval 1259 to 1387 is N-terminal hotdog fold; that stretch reads PPYQFERTRH…AHISMHDVRC (129 aa). The region spanning 1259–1562 is the PKS/mFAS DH domain; it reads PPYQFERTRH…YSRVAKSLFT (304 aa). The active-site Proton acceptor; for dehydratase activity is H1291. The product template (PT) domain stretch occupies residues 1297–1558; sequence APIAPATLLL…LGLRYSRVAK (262 aa). Residues 1415 to 1562 are C-terminal hotdog fold; it reads VDDILQGRNV…YSRVAKSLFT (148 aa). Residue D1471 is the Proton donor; for dehydratase activity of the active site. Residues 1588-1662 enclose the Carrier domain; sequence KDLVSRVKAV…DLVQAVQSAL (75 aa). S1622 is subject to O-(pantetheine 4'-phosphoryl)serine. Positions 1822-2063 are methyltransferase (CMeT) domain; sequence REYPEYGGAS…YGHVDWTDGE (242 aa). Residues 2128 to 2366 form an NADPH-binding domain region; it reads VTGATGSLGS…TPVDVAARII (239 aa).

It depends on pantetheine 4'-phosphate as a cofactor.

It carries out the reaction decanoyl-[ACP] + 4 malonyl-CoA + AH2 + S-adenosyl-L-methionine + 3 H(+) = 2,4-dihydroxy-3-methyl-6-(2-oxoundecyl)benzaldehyde + holo-[ACP] + A + S-adenosyl-L-homocysteine + 4 CO2 + 4 CoA + H2O. Its pathway is secondary metabolite biosynthesis. Non-reducing polyketide synthase; part of the pki gene cluster that mediates the biosynthesis of 2,4-dihydroxy-3-methyl-6-(2-oxoundecyl)benzaldehyde. The first step in the pathway is the generation of the decanoyl starter unit by the FAS composed of subunits pkiB and pkiC, which is then transferred directly from the FAS to the SAT domain of the non-reducing polyketide synthase pkiA. PkiA condenses the decanoyyl starter unit with 4 malonyl-CoA units and performs one methylation step to yield 2,4-dihydroxy-3-methyl-6-(2-oxoundecyl)benzaldehyde. The chain is Non-reducing polyketide synthase pkiA from Emericella nidulans (strain FGSC A4 / ATCC 38163 / CBS 112.46 / NRRL 194 / M139) (Aspergillus nidulans).